A 450-amino-acid polypeptide reads, in one-letter code: Glucose-6-phosphate isomerase (450 aa).

Glu290 serves as the catalytic Proton donor. Active-site residues include His311 and Lys425.

It belongs to the GPI family.

The protein localises to the cytoplasm. The catalysed reaction is alpha-D-glucose 6-phosphate = beta-D-fructose 6-phosphate. Its pathway is carbohydrate biosynthesis; gluconeogenesis. It functions in the pathway carbohydrate degradation; glycolysis; D-glyceraldehyde 3-phosphate and glycerone phosphate from D-glucose: step 2/4. Functionally, catalyzes the reversible isomerization of glucose-6-phosphate to fructose-6-phosphate. This is Glucose-6-phosphate isomerase from Listeria monocytogenes serovar 1/2a (strain ATCC BAA-679 / EGD-e).